A 549-amino-acid polypeptide reads, in one-letter code: RNA-induced transcriptional silencing complex protein tas3 (549 aa).

Disordered regions lie at residues 89-111 (KNSP…VRAS), 126-184 (DGKE…SDSI), 202-225 (IRSS…SSKS), 298-361 (LDNF…HLEK), and 381-430 (AHFH…PLAS). Polar residues predominate over residues 298-307 (LDNFNRPSQQ). Basic and acidic residues-rich tracts occupy residues 328 to 361 (YDSY…HLEK) and 403 to 416 (SDRQ…ELPT). A compositionally biased stretch (polar residues) spans 419–430 (LNASDSHNPLAS).

As to quaternary structure, ago1, chp1 and tas3 interact to form the core of the RNA-induced transcriptional silencing (RITS) complex. The RITS complex interacts with the RDRC complex via interaction between ago1 and hrr1. Clr4 has a role in mediating this interaction.

Its subcellular location is the nucleus. It is found in the cytoplasm. The protein localises to the cytoskeleton. The protein resides in the microtubule organizing center. It localises to the spindle pole body. Has a role in the RNA interference (RNAi) pathway which is important for heterochromatin formation and accurate chromosome segregation. A member of the RNA-induced transcriptional silencing (RITS) complex which is involved in the biosynthesis of dsRNA from primer siRNAs provided by the RNA-directed RNA polymerase (RDRC) complex. This is RNA-induced transcriptional silencing complex protein tas3 (tas3) from Schizosaccharomyces pombe (strain 972 / ATCC 24843) (Fission yeast).